Consider the following 326-residue polypeptide: Dehydrogenase/reductase SDR family protein 7-like (326 aa).

The Cytoplasmic portion of the chain corresponds to 1–17 (MKVQDMDKCAPSSDWNV). The chain crosses the membrane as a helical; Signal-anchor for type II membrane protein span at residues 18–38 (LYWVLGTVLMPVALPLAIINI). Over 39–326 (WQRFQAQKFR…KLENAEKKST (288 aa)) the chain is Peroxisomal. 57–81 (LITGASSGLGESLAHVFYRAGCRVI) contacts NAD(+). Ser-193 provides a ligand contact to substrate. The active-site Proton acceptor is the Tyr-206.

Belongs to the short-chain dehydrogenases/reductases (SDR) family.

The protein resides in the peroxisome membrane. Putative oxidoreductase. The polypeptide is Dehydrogenase/reductase SDR family protein 7-like (Drosophila melanogaster (Fruit fly)).